Here is a 122-residue protein sequence, read N- to C-terminus: MTDAPRSPDALSPDRVTTAFDLPGHTTVRALGVAQGIVVRSRSIVGTFGASLQTLFGGNITLYTSLCEKARQHAFDKMLDDARRLGANAVVAMRYDSTEIGSGVTEVICYGTAVQVAPDAGR.

It belongs to the UPF0145 family.

The sequence is that of UPF0145 protein Bmul_3577/BMULJ_04940 from Burkholderia multivorans (strain ATCC 17616 / 249).